A 327-amino-acid polypeptide reads, in one-letter code: Glutaminase 1 (327 aa).

Positions 74, 126, 170, 177, 201, 253, and 271 each coordinate substrate.

Belongs to the glutaminase family. Homotetramer.

It catalyses the reaction L-glutamine + H2O = L-glutamate + NH4(+). In Bacillus subtilis (strain 168), this protein is Glutaminase 1 (glsA1).